The primary structure comprises 476 residues: Siroheme synthase (476 aa).

The tract at residues 1–204 (MDYFPVFLNI…GKDQAAQDYL (204 aa)) is precorrin-2 dehydrogenase /sirohydrochlorin ferrochelatase. NAD(+) is bound by residues 22-23 (SV) and 43-44 (PT). The residue at position 129 (Ser129) is a Phosphoserine. Positions 218–476 (GEVYLVGAGP…GNTPGYSKHP (259 aa)) are uroporphyrinogen-III C-methyltransferase. Residue Pro227 coordinates S-adenosyl-L-methionine. The Proton acceptor role is filled by Asp250. Catalysis depends on Lys272, which acts as the Proton donor. S-adenosyl-L-methionine contacts are provided by residues 303–305 (GGD), Ile308, 333–334 (TA), Met385, and Gly414.

In the N-terminal section; belongs to the precorrin-2 dehydrogenase / sirohydrochlorin ferrochelatase family. This sequence in the C-terminal section; belongs to the precorrin methyltransferase family.

It catalyses the reaction uroporphyrinogen III + 2 S-adenosyl-L-methionine = precorrin-2 + 2 S-adenosyl-L-homocysteine + H(+). The enzyme catalyses precorrin-2 + NAD(+) = sirohydrochlorin + NADH + 2 H(+). The catalysed reaction is siroheme + 2 H(+) = sirohydrochlorin + Fe(2+). The protein operates within cofactor biosynthesis; adenosylcobalamin biosynthesis; precorrin-2 from uroporphyrinogen III: step 1/1. It participates in cofactor biosynthesis; adenosylcobalamin biosynthesis; sirohydrochlorin from precorrin-2: step 1/1. It functions in the pathway porphyrin-containing compound metabolism; siroheme biosynthesis; precorrin-2 from uroporphyrinogen III: step 1/1. Its pathway is porphyrin-containing compound metabolism; siroheme biosynthesis; siroheme from sirohydrochlorin: step 1/1. The protein operates within porphyrin-containing compound metabolism; siroheme biosynthesis; sirohydrochlorin from precorrin-2: step 1/1. Multifunctional enzyme that catalyzes the SAM-dependent methylations of uroporphyrinogen III at position C-2 and C-7 to form precorrin-2 via precorrin-1. Then it catalyzes the NAD-dependent ring dehydrogenation of precorrin-2 to yield sirohydrochlorin. Finally, it catalyzes the ferrochelation of sirohydrochlorin to yield siroheme. In Nitrosomonas eutropha (strain DSM 101675 / C91 / Nm57), this protein is Siroheme synthase.